Reading from the N-terminus, the 137-residue chain is Ribosome-binding factor A (137 aa).

Belongs to the RbfA family. In terms of assembly, monomer. Binds 30S ribosomal subunits, but not 50S ribosomal subunits or 70S ribosomes.

The protein resides in the cytoplasm. Its function is as follows. One of several proteins that assist in the late maturation steps of the functional core of the 30S ribosomal subunit. Associates with free 30S ribosomal subunits (but not with 30S subunits that are part of 70S ribosomes or polysomes). Required for efficient processing of 16S rRNA. May interact with the 5'-terminal helix region of 16S rRNA. This is Ribosome-binding factor A from Cereibacter sphaeroides (strain KD131 / KCTC 12085) (Rhodobacter sphaeroides).